Here is a 940-residue protein sequence, read N- to C-terminus: Protein translocase subunit SecA (940 aa).

ATP is bound by residues Gln-86, 104–108 (GEGKT), and Asp-494. The disordered stretch occupies residues 884 to 940 (ATAKAQKDQQAEDAVLVGEDEPETPQGPPARGAFGQPTGASSAPQNREERRKADRRK). Basic and acidic residues predominate over residues 929–940 (NREERRKADRRK).

The protein belongs to the SecA family. Monomer and homodimer. Part of the essential Sec protein translocation apparatus which comprises SecA, SecYEG and auxiliary proteins SecDF. Other proteins may also be involved.

It is found in the cell membrane. The protein localises to the cytoplasm. The enzyme catalyses ATP + H2O + cellular proteinSide 1 = ADP + phosphate + cellular proteinSide 2.. Part of the Sec protein translocase complex. Interacts with the SecYEG preprotein conducting channel. Has a central role in coupling the hydrolysis of ATP to the transfer of proteins into and across the cell membrane, serving as an ATP-driven molecular motor driving the stepwise translocation of polypeptide chains across the membrane. In Clavibacter sepedonicus (Clavibacter michiganensis subsp. sepedonicus), this protein is Protein translocase subunit SecA.